Reading from the N-terminus, the 371-residue chain is Poly(rC)-binding protein 3 (371 aa).

KH domains are found at residues 45-95, 129-182, and 293-357; these read TLTI…TITG, PVTL…TISG, and ASTH…QYLI.

In terms of tissue distribution, widely expressed, with highest levels in testis and fat tissues and lowest in heart.

Its subcellular location is the cytoplasm. Functionally, single-stranded nucleic acid binding protein that binds preferentially to oligo dC. This chain is Poly(rC)-binding protein 3 (Pcbp3), found in Mus musculus (Mouse).